The chain runs to 105 residues: Ferredoxin-2 (105 aa).

In terms of domain architecture, 2Fe-2S ferredoxin-type spans 4–94 (YQVEVIYQGQ…DLKIETHKED (91 aa)). Cys40, Cys45, Cys48, and Cys78 together coordinate [2Fe-2S] cluster.

It belongs to the 2Fe2S plant-type ferredoxin family. Forms a complex with heterodimeric ferredoxin-thioredoxin reductase (FTR) and thioredoxin. The cofactor is [2Fe-2S] cluster.

Its function is as follows. Ferredoxins are iron-sulfur proteins that transfer electrons in a wide variety of metabolic reactions. This Synechococcus sp. (strain ATCC 27144 / PCC 6301 / SAUG 1402/1) (Anacystis nidulans) protein is Ferredoxin-2 (petF2).